The following is a 232-amino-acid chain: Large ribosomal subunit protein uL1 (232 aa).

Belongs to the universal ribosomal protein uL1 family. As to quaternary structure, part of the 50S ribosomal subunit.

Binds directly to 23S rRNA. The L1 stalk is quite mobile in the ribosome, and is involved in E site tRNA release. Functionally, protein L1 is also a translational repressor protein, it controls the translation of the L11 operon by binding to its mRNA. This is Large ribosomal subunit protein uL1 from Ruegeria pomeroyi (strain ATCC 700808 / DSM 15171 / DSS-3) (Silicibacter pomeroyi).